The chain runs to 336 residues: Immune-associated nucleotide-binding protein 13 (336 aa).

Residues 15–221 (KPERTLVLLG…YMADLSHELR (207 aa)) enclose the AIG1-type G domain. Residues 24–31 (GRTGNGKS) are G1. Residues 24-32 (GRTGNGKSA) and Ser-45 contribute to the GTP site. The interval 51–55 (FITKE) is G2. The tract at residues 73-76 (DTPG) is G3. The segment at 143–146 (TNED) is G4. Positions 179-181 (DNS) are G5. Asn-180 provides a ligand contact to GTP. Residues 265–328 (KEKISNQLKE…EKETASLRTE (64 aa)) adopt a coiled-coil conformation.

This sequence belongs to the TRAFAC class TrmE-Era-EngA-EngB-Septin-like GTPase superfamily. AIG1/Toc34/Toc159-like paraseptin GTPase family. IAN subfamily. In terms of tissue distribution, expressed in pollen grains.

The protein is Immune-associated nucleotide-binding protein 13 of Arabidopsis thaliana (Mouse-ear cress).